Consider the following 95-residue polypeptide: Small ribosomal subunit protein uS19 (95 aa).

The protein belongs to the universal ribosomal protein uS19 family.

Protein S19 forms a complex with S13 that binds strongly to the 16S ribosomal RNA. The polypeptide is Small ribosomal subunit protein uS19 (Thermosipho africanus (strain TCF52B)).